We begin with the raw amino-acid sequence, 332 residues long: tRNA-dihydrouridine(20/20a) synthase (332 aa).

Residues Pro-20–Met-22 and Gln-73 contribute to the FMN site. Cys-103 serves as the catalytic Proton donor. FMN is bound by residues Lys-142, His-174, Asn-214 to Gly-216, and Gly-236 to Arg-237.

This sequence belongs to the Dus family. DusA subfamily. The cofactor is FMN.

It catalyses the reaction 5,6-dihydrouridine(20) in tRNA + NADP(+) = uridine(20) in tRNA + NADPH + H(+). The enzyme catalyses 5,6-dihydrouridine(20) in tRNA + NAD(+) = uridine(20) in tRNA + NADH + H(+). It carries out the reaction 5,6-dihydrouridine(20a) in tRNA + NADP(+) = uridine(20a) in tRNA + NADPH + H(+). The catalysed reaction is 5,6-dihydrouridine(20a) in tRNA + NAD(+) = uridine(20a) in tRNA + NADH + H(+). Its function is as follows. Catalyzes the synthesis of 5,6-dihydrouridine (D), a modified base found in the D-loop of most tRNAs, via the reduction of the C5-C6 double bond in target uridines. Specifically modifies U20 and U20a in tRNAs. In Pseudomonas aeruginosa (strain ATCC 15692 / DSM 22644 / CIP 104116 / JCM 14847 / LMG 12228 / 1C / PRS 101 / PAO1), this protein is tRNA-dihydrouridine(20/20a) synthase.